A 390-amino-acid polypeptide reads, in one-letter code: uncharacterized protein (390 aa).

The Glutaredoxin domain maps to 215–325 (SRFKRKTLGK…KLIKDCEMVE (111 aa)).

This is an uncharacterized protein from Arabidopsis thaliana (Mouse-ear cress).